A 327-amino-acid polypeptide reads, in one-letter code: Phenylalanine--tRNA ligase alpha subunit (327 aa).

Residue Glu-252 coordinates Mg(2+).

It belongs to the class-II aminoacyl-tRNA synthetase family. Phe-tRNA synthetase alpha subunit type 1 subfamily. In terms of assembly, tetramer of two alpha and two beta subunits. Mg(2+) is required as a cofactor.

It localises to the cytoplasm. It carries out the reaction tRNA(Phe) + L-phenylalanine + ATP = L-phenylalanyl-tRNA(Phe) + AMP + diphosphate + H(+). The polypeptide is Phenylalanine--tRNA ligase alpha subunit (Shewanella frigidimarina (strain NCIMB 400)).